A 181-amino-acid polypeptide reads, in one-letter code: Protein Syd (181 aa).

It belongs to the Syd family.

It localises to the cell inner membrane. Interacts with the SecY protein in vivo. May bind preferentially to an uncomplexed state of SecY, thus functioning either as a chelating agent for excess SecY in the cell or as a regulatory factor that negatively controls the translocase function. This is Protein Syd from Klebsiella pneumoniae (strain 342).